We begin with the raw amino-acid sequence, 238 residues long: Ribonuclease PH (238 aa).

Phosphate is bound by residues arginine 86 and 124–126 (GTR).

Belongs to the RNase PH family. Homohexameric ring arranged as a trimer of dimers.

It carries out the reaction tRNA(n+1) + phosphate = tRNA(n) + a ribonucleoside 5'-diphosphate. Functionally, phosphorolytic 3'-5' exoribonuclease that plays an important role in tRNA 3'-end maturation. Removes nucleotide residues following the 3'-CCA terminus of tRNAs; can also add nucleotides to the ends of RNA molecules by using nucleoside diphosphates as substrates, but this may not be physiologically important. Probably plays a role in initiation of 16S rRNA degradation (leading to ribosome degradation) during starvation. The protein is Ribonuclease PH of Hahella chejuensis (strain KCTC 2396).